The following is a 328-amino-acid chain: G2/mitotic-specific cyclin-2 (328 aa).

This sequence belongs to the cyclin family. Cyclin AB subfamily. In terms of assembly, interacts with the CDC2 protein kinase to form a serine/threonine kinase holoenzyme complex also known as maturation promoting factor (MPF). The cyclin subunit imparts substrate specificity to the complex. Only expressed in organs with dividing cells.

In terms of biological role, essential for the control of the cell cycle at the G2/M (mitosis) transition. The sequence is that of G2/mitotic-specific cyclin-2 from Medicago sativa (Alfalfa).